The sequence spans 350 residues: Hydroxymethylglutaryl-CoA synthase (350 aa).

Aspartate 30 serves as a coordination point for (3S)-3-hydroxy-3-methylglutaryl-CoA. The Proton donor/acceptor role is filled by glutamate 82. The (3S)-3-hydroxy-3-methylglutaryl-CoA site is built by cysteine 114, serine 155, threonine 203, and histidine 236. The active-site Acyl-thioester intermediate is cysteine 114. The Proton donor/acceptor role is filled by histidine 236. CoA is bound at residue arginine 241. 3 residues coordinate (3S)-3-hydroxy-3-methylglutaryl-CoA: arginine 245, asparagine 268, and serine 298.

Belongs to the thiolase-like superfamily. Archaeal HMG-CoA synthase family. Interacts with acetoacetyl-CoA thiolase that catalyzes the precedent step in the pathway and with a DUF35 protein. The acetoacetyl-CoA thiolase/HMG-CoA synthase complex channels the intermediate via a fused CoA-binding site, which allows for efficient coupling of the endergonic thiolase reaction with the exergonic HMGCS reaction.

It catalyses the reaction acetoacetyl-CoA + acetyl-CoA + H2O = (3S)-3-hydroxy-3-methylglutaryl-CoA + CoA + H(+). It participates in metabolic intermediate biosynthesis; (R)-mevalonate biosynthesis; (R)-mevalonate from acetyl-CoA: step 2/3. Functionally, catalyzes the condensation of acetyl-CoA with acetoacetyl-CoA to form 3-hydroxy-3-methylglutaryl-CoA (HMG-CoA). Functions in the mevalonate (MVA) pathway leading to isopentenyl diphosphate (IPP), a key precursor for the biosynthesis of isoprenoid compounds that are building blocks of archaeal membrane lipids. In Pyrobaculum calidifontis (strain DSM 21063 / JCM 11548 / VA1), this protein is Hydroxymethylglutaryl-CoA synthase.